Reading from the N-terminus, the 224-residue chain is Prolactin-2C3 (224 aa).

Residues 1-29 form the signal peptide; it reads MLPSSIQPCSWILLLLLVNSSLLWKNVAS. Asparagine 19 carries N-linked (GlcNAc...) asparagine glycosylation. Residues cysteine 33 and cysteine 40 are joined by a disulfide bond. 3 N-linked (GlcNAc...) asparagine glycosylation sites follow: asparagine 57, asparagine 75, and asparagine 88. Cystine bridges form between cysteine 87-cysteine 199 and cysteine 216-cysteine 224.

The protein belongs to the somatotropin/prolactin family. N-glycosylated and sialylated. In terms of tissue distribution, expressed in placenta and hair follicles, with highest expression levels detected in the outer root sheath and no expression detected in bulb. Expressed in placenta, skin wounds, keratinocytes and weakly in embryonic fibroblasts. Expressed in brain, cerebellum and in Neuro-2a cell line. Not detected in liver, kidney, ovary, pituitary gland and brain.

It is found in the secreted. The protein localises to the endoplasmic reticulum. In terms of biological role, may have a role in embryonic development. It is likely to provide a growth stimulus to target cells in maternal and fetal tissues during the development of the embryo at mid-gestation. May play a role during wound healing and in the hair follicle cycle as a growth factor and/or an angiogenesis factor. May play a role in microvilli formation and cell proliferation of neuroblastoma cells. The chain is Prolactin-2C3 (Prl2c3) from Mus musculus (Mouse).